The sequence spans 855 residues: Photoactivated adenylate cyclase subunit beta-like protein 1224-5/9F (855 aa).

The BLUF 1 domain occupies 56–149; the sequence is LRRLMYLSKG…GRMSGVWHMK (94 aa). The interval 420-444 is disordered; that stretch reads RPPIFDDTPKCNPRPRTPGCEGRQR. One can recognise a BLUF 2 domain in the interval 471 to 563; that stretch reads VPTLTYISHA…RVYPSEWTLT (93 aa). The segment covering 813–827 has biased composition (basic and acidic residues); sequence RSGEKPLTEPEEAKL. The segment at 813-855 is disordered; sequence RSGEKPLTEPEEAKLDFSPGRVRHGDSGRRSNSAQGKLSIQVR. Polar residues predominate over residues 842 to 855; it reads RSNSAQGKLSIQVR.

Heterotetramer of two alpha and two beta subunits.

The protein localises to the cell projection. Its subcellular location is the cilium. The protein resides in the flagellum. The chain is Photoactivated adenylate cyclase subunit beta-like protein 1224-5/9F from Euglena gracilis.